We begin with the raw amino-acid sequence, 156 residues long: Small ribosomal subunit protein uS7c (156 aa).

This sequence belongs to the universal ribosomal protein uS7 family. As to quaternary structure, part of the 30S ribosomal subunit.

Its subcellular location is the plastid. It is found in the chloroplast. Functionally, one of the primary rRNA binding proteins, it binds directly to 16S rRNA where it nucleates assembly of the head domain of the 30S subunit. This chain is Small ribosomal subunit protein uS7c (rps7), found in Thalassiosira pseudonana (Marine diatom).